The primary structure comprises 465 residues: MNVTSLFSFTSPAVKRLLGWKQGDEEEKWAEKAVDALVKKLKKKKGAMEELEKALSCPGQPSNCVTIPRSLDGRLQVSHRKGLPHVIYCRVWRWPDLQSHHELKPLECCEFPFGSKQKEVCINPYHYKRVESPVLPPVLVPRHSEYNPQHSLLAQFRNLGQNEPHMPLNATFPDSFQQPNSHPFPHSPNSSYPNSPGGSSSTYPHSPTSSDPGSPFQMPADTPPPAYLPPEDPMAQDGSQPMDTNMMAPPLPAEISRGDVQAVAYEEPKHWCSIVYYELNNRVGEAFHASSTSVLVDGFTDPSNNKNRFCLGLLSNVNRNSTIENTRRHIGKGVHLYYVGGEVYAECLSDSSIFVQSRNCNYHHGFHPTTVCKIPSGCSLKIFNNQEFAQLLAQSVNHGFETVYELTKMCTIRMSFVKGWGAEYHRQDVTSTPCWIEIHLHGPLQWLDKVLTQMGSPHNPISSVS.

Met-1 bears the N-acetylmethionine mark. In terms of domain architecture, MH1 spans 12–136 (PAVKRLLGWK…YKRVESPVLP (125 aa)). 4 residues coordinate Zn(2+): Cys-64, Cys-109, Cys-121, and His-126. The interval 162-246 (NEPHMPLNAT…DGSQPMDTNM (85 aa)) is disordered. Residues 179 to 212 (PNSHPFPHSPNSSYPNSPGGSSSTYPHSPTSSDP) are compositionally biased toward low complexity. Residues 221 to 232 (DTPPPAYLPPED) are compositionally biased toward pro residues. Residues 271-465 (WCSIVYYELN…SPHNPISSVS (195 aa)) form the MH2 domain. The residue at position 322 (Thr-322) is a Phosphothreonine; by MINK1, TNIK and MAP4K4. The interval 418–428 (KGWGAEYHRQD) is L3 loop. A phosphoserine mark is found at Ser-463 and Ser-465.

Belongs to the dwarfin/SMAD family. In terms of assembly, found in a complex with SMAD4 and YY1. Interacts with HGS, NANOG and ZCCHC12. Upon C-terminus phosphorylation: forms trimers with another SMAD1 and the co-SMAD SMAD4. Interacts with PEBP2-alpha subunit, CREB-binding protein (CBP), p300, SMURF1, SMURF2, USP15 and HOXC8. Associates with ZNF423 or ZNF521 in response to BMP2 leading to activate transcription of BMP target genes. Interacts with SKOR1. Interacts (via MH2 domain) with LEMD3. Binding to LEMD3 results in at least a partial reduction of receptor-mediated phosphorylation. Forms a ternary complex with PSMB4 and OAZ1 before PSMB4 is incorporated into the 20S proteasome. Interacts (via MH2 domain) with FAM83G (via MH2 domain); in a SMAD4-independent manner. Interacts with ZC3H3. Interacts with TMEM119. Interacts (via MH1 and MH2 domains) with ZNF8. Interacts with RANBP3L; the interaction increases when SMAD1 is not phosphorylated and mediates SMAD1 nuclear export. Interacts with EGR1; this interaction inhibits SMAD1 dephosphorylation. Interacts with SMAD6. Interacts with YAP1. Interacts with MTMR4; negatively regulates BMP signaling through SMAD1 dephosphorylation and retention in endosomes. Phosphorylation of the C-terminal SVS motif by BMP type 1 receptor kinase activates SMAD1 by promoting dissociation from the receptor and trimerization with SMAD4. Phosphorylation by ERK2 MAP kinase in response to EGF or HGF prevents SMAD1 nuclear accumulation and transcriptional activity in response to BMP. Dephosphorylation, probably by PPM1A, induces its export from the nucleus to the cytoplasm. Dephosphorylation is inhibited by association with EGR1. Phosphorylation by CDK8/9 creates binding sites for YAP1, and subsequent phosphorylation by GSK3 switches off YAP1 binding and adds binding sites for SMURF1. In terms of processing, ubiquitinated by SMAD-specific E3 ubiquitin ligase SMURF1, leading to its degradation. Monoubiquitinated, leading to prevent DNA-binding. Deubiquitination by USP15 alleviates inhibition and promotes activation of TGF-beta target genes. Dephosphorylation, probably by PPM1A, induces its export from the nucleus to the cytoplasm. Phospho-SMAD1 is ubiquitinated by CHIP leading to disruption of the SMAD1-SMAD4 complex. As to expression, ubiquitous.

The protein localises to the cytoplasm. It localises to the nucleus. Its function is as follows. Transcriptional modulator that plays a role in various cellular processes, including embryonic development, cell differentiation, and tissue homeostasis. Upon BMP ligand binding to their receptors at the cell surface, is phosphorylated by activated type I BMP receptors (BMPRIs) and associates with SMAD4 to form a heteromeric complex which translocates into the nucleus acting as transcription factor. In turn, the hetero-trimeric complex recognizes cis-regulatory elements containing Smad Binding Elements (SBEs) to modulate the outcome of the signaling network. SMAD1/OAZ1/PSMB4 complex mediates the degradation of the CREBBP/EP300 repressor SNIP1. Positively regulates BMP4-induced expression of odontogenic development regulator MSX1 following IPO7-mediated nuclear import. The chain is Mothers against decapentaplegic homolog 1 (Smad1) from Mus musculus (Mouse).